A 100-amino-acid polypeptide reads, in one-letter code: Large ribosomal subunit protein bL21 (100 aa).

Belongs to the bacterial ribosomal protein bL21 family. As to quaternary structure, part of the 50S ribosomal subunit. Contacts protein L20.

Its function is as follows. This protein binds to 23S rRNA in the presence of protein L20. The sequence is that of Large ribosomal subunit protein bL21 from Mycoplasma mycoides subsp. mycoides SC (strain CCUG 32753 / NCTC 10114 / PG1).